Reading from the N-terminus, the 385-residue chain is Acetate kinase (385 aa).

Asn9 contacts Mg(2+). Lys16 is an ATP binding site. Arg87 is a binding site for substrate. Asp144 functions as the Proton donor/acceptor in the catalytic mechanism. ATP contacts are provided by residues 202–206 (HLGSG) and 277–279 (DMR). A Mg(2+)-binding site is contributed by Glu373.

The protein belongs to the acetokinase family. In terms of assembly, homodimer. Mg(2+) serves as cofactor. Mn(2+) is required as a cofactor.

It localises to the cytoplasm. It catalyses the reaction acetate + ATP = acetyl phosphate + ADP. The protein operates within metabolic intermediate biosynthesis; acetyl-CoA biosynthesis; acetyl-CoA from acetate: step 1/2. Functionally, catalyzes the formation of acetyl phosphate from acetate and ATP. Can also catalyze the reverse reaction. This is Acetate kinase from Rickettsia typhi (strain ATCC VR-144 / Wilmington).